Consider the following 545-residue polypeptide: Chaperonin GroEL (545 aa).

Residues 30–33 (TLGP), Lys-51, 87–91 (DGTTT), Gly-415, and Asp-495 contribute to the ATP site.

The protein belongs to the chaperonin (HSP60) family. Forms a cylinder of 14 subunits composed of two heptameric rings stacked back-to-back. Interacts with the co-chaperonin GroES.

It is found in the cytoplasm. The catalysed reaction is ATP + H2O + a folded polypeptide = ADP + phosphate + an unfolded polypeptide.. In terms of biological role, together with its co-chaperonin GroES, plays an essential role in assisting protein folding. The GroEL-GroES system forms a nano-cage that allows encapsulation of the non-native substrate proteins and provides a physical environment optimized to promote and accelerate protein folding. This is Chaperonin GroEL from Shewanella sp. (strain W3-18-1).